We begin with the raw amino-acid sequence, 337 residues long: Ferredoxin--NADP reductase (337 aa).

Residues Asp33, Gln41, Tyr46, Ala86, Phe120, Asp286, and Thr327 each coordinate FAD.

It belongs to the ferredoxin--NADP reductase type 2 family. In terms of assembly, homodimer. FAD serves as cofactor.

The catalysed reaction is 2 reduced [2Fe-2S]-[ferredoxin] + NADP(+) + H(+) = 2 oxidized [2Fe-2S]-[ferredoxin] + NADPH. This is Ferredoxin--NADP reductase from Rickettsia canadensis (strain McKiel).